The chain runs to 902 residues: Androgen receptor (902 aa).

The tract at residues 1–540 (MEVQLGLGRV…PIDYYFPPQK (540 aa)) is modulating. The interaction with ZNF318 stretch occupies residues 1–569 (MEVQLGLGRV…GSCKVFFKRA (569 aa)). Disordered stretches follow at residues 35–146 (QNPG…LSLL) and 194–224 (QQEV…YLGG). The residue at position 61 (Ser-61) is a Phosphoserine; by CDK9. Ser-75 carries the phosphoserine modification. Residues 94–103 (QPSQQQSASE) are compositionally biased toward low complexity. 2 stretches are compositionally biased toward polar residues: residues 196–205 (EVISEGSSSV) and 213–224 (APSSSKDSYLGG). Tyr-221 bears the Phosphotyrosine; by CSK mark. Phosphoserine is present on Ser-254. The residue at position 265 (Tyr-265) is a Phosphotyrosine; by CSK and TNK2. Residue Ser-290 is modified to Phosphoserine. 4 positions are modified to phosphotyrosine; by CSK: Tyr-305, Tyr-344, Tyr-355, and Tyr-360. Tyr-361 carries the phosphotyrosine; by CSK and TNK2 modification. Residue Lys-384 forms a Glycyl lysine isopeptide (Lys-Gly) (interchain with G-Cter in SUMO) linkage. The residue at position 391 (Tyr-391) is a Phosphotyrosine; by CSK. The segment at 439 to 465 (EGQLYGPGGGGGSSSPSDAGPVAPYGY) is disordered. Residue Lys-503 forms a Glycyl lysine isopeptide (Lys-Gly) (interchain with G-Cter in SUMO) linkage. A phosphotyrosine; by CSK mark is found at Tyr-517 and Tyr-534. The interval 534 to 901 (YYFPPQKTCL…GKVKPIYFHT (368 aa)) is interaction with LPXN. A DNA-binding region (nuclear receptor) is located at residues 541–614 (TCLICGDEAS…AGMTLGARKL (74 aa)). NR C4-type zinc fingers lie at residues 542–562 (CLIC…CGSC) and 578–602 (CASR…LRKC). Residues 554 to 644 (YGALTCGSCK…TEDPSQKMTV (91 aa)) form an interaction with HIPK3 region. Residues 574 to 901 (QKYLCASRND…GKVKPIYFHT (328 aa)) form an interaction with CCAR1 region. Positions 607–901 (MTLGARKLKK…GKVKPIYFHT (295 aa)) are interaction with KAT7. Residue Ser-633 is modified to Phosphoserine. The NR LBD domain occupies 651–882 (ECQPIFLNVL…DFPEMMAEII (232 aa)). 17beta-hydroxy-5alpha-androstan-3-one contacts are provided by Asn-688 and Arg-735. Residues Lys-828 and Lys-830 each participate in a glycyl lysine isopeptide (Lys-Gly) (interchain with G-Cter in ubiquitin) cross-link. Thr-860 lines the 17beta-hydroxy-5alpha-androstan-3-one pocket. Position 898 is a phosphotyrosine; by CSK (Tyr-898).

Belongs to the nuclear hormone receptor family. NR3 subfamily. As to quaternary structure, binds DNA as a homodimer. Part of a ternary complex containing AR, EFCAB6/DJBP and PARK7. Interacts with HIPK3 and NR0B2 in the presence of androgen. The ligand binding domain interacts with KAT7/HBO1 in the presence of dihydrotestosterone. Interacts with EFCAB6/DJBP, PQBP1, RANBP9, RBAK, SPDEF, SRA1, TGFB1I1, ZNF318 and RREB1. Interacts with ZMIZ1/ZIMP10 and ZMIZ2/ZMIP7 which both enhance its transactivation activity. Interacts with SLC30A9 and RAD54L2/ARIP4. Interacts with MACROD1 (via macro domain). Interacts via the ligand-binding domain with LXXLL and FXXLF motifs from NCOA1, NCOA2, NCOA3 and MAGEA11. Interacts (via nuclear receptor DNA binding domain and nuclear receptor ligand binding domain) with NCOA4. The AR N-terminal poly-Gln region binds Ran resulting in enhancement of AR-mediated transactivation. Ran-binding decreases as the poly-Gln length increases. Interacts with HIP1 (via coiled coil domain). Interacts (via ligand-binding domain) with TRIM68. Interacts with TNK2. Interacts with USP26. Interacts with RNF6. Interacts (regulated by RNF6 probably through polyubiquitination) with RNF14; regulates AR transcriptional activity. Interacts with PRMT2 and TRIM24. Interacts with RACK1. Interacts with RANBP10; this interaction enhances dihydrotestosterone-induced AR transcriptional activity. Interacts with PRPF6 in a hormone-independent way; this interaction enhances dihydrotestosterone-induced AR transcriptional activity. Interacts with STK4/MST1. Interacts with ZIPK/DAPK3. Interacts with LPXN. Interacts with MAK. Part of a complex containing AR, MAK and NCOA3. Interacts with CRY1. Interacts with CCAR1 and GATA2. Interacts with BUD31. Interacts with ARID4A. Interacts with ARID4B. Interacts (via NR LBD domain) with ZBTB7A; the interaction is direct and androgen-dependent. Interacts with NCOR1. Interacts with NCOR2. Interacts with CRY2 in a ligand-dependent manner. Post-translationally, phosphorylated in prostate cancer cells in response to several growth factors including EGF. Phosphorylation is induced by c-Src kinase (CSK). Tyr-517 is one of the major phosphorylation sites and an increase in phosphorylation and Src kinase activity is associated with prostate cancer progression. Phosphorylation by TNK2 enhances the DNA-binding and transcriptional activity. Phosphorylation at Ser-61 by CDK9 regulates AR promoter selectivity and cell growth. Phosphorylation by PAK6 leads to AR-mediated transcription inhibition. Sumoylated on Lys-384 (major) and Lys-503. Ubiquitinated. Deubiquitinated by USP26. 'Lys-6' and 'Lys-27'-linked polyubiquitination by RNF6 modulates AR transcriptional activity and specificity. In terms of processing, palmitoylated by ZDHHC7 and ZDHHC21. Palmitoylation is required for plasma membrane targeting and for rapid intracellular signaling via ERK and AKT kinases and cAMP generation. Highest levels in the seminal vesicle, ventral prostate and coagulating gland with lower levels in the kidney and levator ani muscle.

The protein resides in the nucleus. It is found in the cytoplasm. In terms of biological role, steroid hormone receptors are ligand-activated transcription factors that regulate eukaryotic gene expression and affect cellular proliferation and differentiation in target tissues. Transcription factor activity is modulated by bound coactivator and corepressor proteins like ZBTB7A that recruits NCOR1 and NCOR2 to the androgen response elements/ARE on target genes, negatively regulating androgen receptor signaling and androgen-induced cell proliferation. Transcription activation is also down-regulated by NR0B2. Activated, but not phosphorylated, by HIPK3 and ZIPK/DAPK3. The sequence is that of Androgen receptor (Ar) from Rattus norvegicus (Rat).